Reading from the N-terminus, the 131-residue chain is Small ribosomal subunit protein bS6 (131 aa).

N6-acetyllysine is present on lysine 93. The disordered stretch occupies residues 98–131; that stretch reads EASPMVKAKDERRERRDDFANETADDAEAGDSEE. Basic and acidic residues predominate over residues 104-116; the sequence is KAKDERRERRDDF. A compositionally biased stretch (acidic residues) spans 120 to 131; sequence TADDAEAGDSEE.

Belongs to the bacterial ribosomal protein bS6 family.

In terms of biological role, binds together with bS18 to 16S ribosomal RNA. This chain is Small ribosomal subunit protein bS6, found in Escherichia fergusonii (strain ATCC 35469 / DSM 13698 / CCUG 18766 / IAM 14443 / JCM 21226 / LMG 7866 / NBRC 102419 / NCTC 12128 / CDC 0568-73).